The chain runs to 270 residues: tRNA pseudouridine synthase A (270 aa).

D60 (nucleophile) is an active-site residue. Y118 contacts substrate.

This sequence belongs to the tRNA pseudouridine synthase TruA family. In terms of assembly, homodimer.

It catalyses the reaction uridine(38/39/40) in tRNA = pseudouridine(38/39/40) in tRNA. Formation of pseudouridine at positions 38, 39 and 40 in the anticodon stem and loop of transfer RNAs. The chain is tRNA pseudouridine synthase A from Cronobacter sakazakii (strain ATCC BAA-894) (Enterobacter sakazakii).